The sequence spans 151 residues: Ribonuclease H (151 aa).

Positions 1–141 constitute an RNase H type-1 domain; sequence MQEVTVYSDG…ADALANKGVE (141 aa). Residues D9, E47, D69, and D133 each contribute to the Mg(2+) site.

Belongs to the RNase H family. As to quaternary structure, monomer. Mg(2+) is required as a cofactor.

The protein localises to the cytoplasm. The enzyme catalyses Endonucleolytic cleavage to 5'-phosphomonoester.. Endonuclease that specifically degrades the RNA of RNA-DNA hybrids. The polypeptide is Ribonuclease H (Ralstonia nicotianae (strain ATCC BAA-1114 / GMI1000) (Ralstonia solanacearum)).